The chain runs to 124 residues: Small ribosomal subunit protein uS12 (124 aa).

A 3-methylthioaspartic acid modification is found at Asp89.

The protein belongs to the universal ribosomal protein uS12 family. In terms of assembly, part of the 30S ribosomal subunit. Contacts proteins S8 and S17. May interact with IF1 in the 30S initiation complex.

Its function is as follows. With S4 and S5 plays an important role in translational accuracy. In terms of biological role, interacts with and stabilizes bases of the 16S rRNA that are involved in tRNA selection in the A site and with the mRNA backbone. Located at the interface of the 30S and 50S subunits, it traverses the body of the 30S subunit contacting proteins on the other side and probably holding the rRNA structure together. The combined cluster of proteins S8, S12 and S17 appears to hold together the shoulder and platform of the 30S subunit. This Yersinia enterocolitica serotype O:8 / biotype 1B (strain NCTC 13174 / 8081) protein is Small ribosomal subunit protein uS12.